The following is a 638-amino-acid chain: 1-deoxy-D-xylulose-5-phosphate synthase (638 aa).

Thiamine diphosphate is bound by residues His-79 and Ala-120 to Ser-122. Residue Asp-151 coordinates Mg(2+). Thiamine diphosphate contacts are provided by residues Gly-152–Ala-153, Asn-180, Tyr-289, and Glu-371. Asn-180 contacts Mg(2+).

The protein belongs to the transketolase family. DXPS subfamily. As to quaternary structure, homodimer. The cofactor is Mg(2+). Requires thiamine diphosphate as cofactor.

The catalysed reaction is D-glyceraldehyde 3-phosphate + pyruvate + H(+) = 1-deoxy-D-xylulose 5-phosphate + CO2. Its pathway is metabolic intermediate biosynthesis; 1-deoxy-D-xylulose 5-phosphate biosynthesis; 1-deoxy-D-xylulose 5-phosphate from D-glyceraldehyde 3-phosphate and pyruvate: step 1/1. Its function is as follows. Catalyzes the acyloin condensation reaction between C atoms 2 and 3 of pyruvate and glyceraldehyde 3-phosphate to yield 1-deoxy-D-xylulose-5-phosphate (DXP). In Rhizobium etli (strain ATCC 51251 / DSM 11541 / JCM 21823 / NBRC 15573 / CFN 42), this protein is 1-deoxy-D-xylulose-5-phosphate synthase.